Consider the following 139-residue polypeptide: Large ribosomal subunit protein bL21 (139 aa).

It belongs to the bacterial ribosomal protein bL21 family. As to quaternary structure, part of the 50S ribosomal subunit. Contacts protein L20.

In terms of biological role, this protein binds to 23S rRNA in the presence of protein L20. This chain is Large ribosomal subunit protein bL21, found in Prochlorococcus marinus (strain NATL2A).